A 381-amino-acid polypeptide reads, in one-letter code: Probable tRNA sulfurtransferase (381 aa).

Residues 55–163 (GECLENLNKV…DDEAFIYHEK (109 aa)) form the THUMP domain. ATP contacts are provided by residues 181 to 182 (LV), lysine 265, glycine 287, and glutamine 296.

This sequence belongs to the ThiI family.

It is found in the cytoplasm. It catalyses the reaction [ThiI sulfur-carrier protein]-S-sulfanyl-L-cysteine + a uridine in tRNA + 2 reduced [2Fe-2S]-[ferredoxin] + ATP + H(+) = [ThiI sulfur-carrier protein]-L-cysteine + a 4-thiouridine in tRNA + 2 oxidized [2Fe-2S]-[ferredoxin] + AMP + diphosphate. The catalysed reaction is [ThiS sulfur-carrier protein]-C-terminal Gly-Gly-AMP + S-sulfanyl-L-cysteinyl-[cysteine desulfurase] + AH2 = [ThiS sulfur-carrier protein]-C-terminal-Gly-aminoethanethioate + L-cysteinyl-[cysteine desulfurase] + A + AMP + 2 H(+). It functions in the pathway cofactor biosynthesis; thiamine diphosphate biosynthesis. Its function is as follows. Catalyzes the ATP-dependent transfer of a sulfur to tRNA to produce 4-thiouridine in position 8 of tRNAs, which functions as a near-UV photosensor. Also catalyzes the transfer of sulfur to the sulfur carrier protein ThiS, forming ThiS-thiocarboxylate. This is a step in the synthesis of thiazole, in the thiamine biosynthesis pathway. The sulfur is donated as persulfide by IscS. In Methanobrevibacter smithii (strain ATCC 35061 / DSM 861 / OCM 144 / PS), this protein is Probable tRNA sulfurtransferase.